The following is a 359-amino-acid chain: Peptide chain release factor 1 (359 aa).

Residue Gln-236 is modified to N5-methylglutamine.

This sequence belongs to the prokaryotic/mitochondrial release factor family. Methylated by PrmC. Methylation increases the termination efficiency of RF1.

It localises to the cytoplasm. Functionally, peptide chain release factor 1 directs the termination of translation in response to the peptide chain termination codons UAG and UAA. The sequence is that of Peptide chain release factor 1 from Streptococcus pneumoniae (strain Taiwan19F-14).